The primary structure comprises 634 residues: DNA gyrase subunit B (634 aa).

The 115-residue stretch at 416–530 (REIYIVEGDS…NGHVYIAMPP (115 aa)) folds into the Toprim domain. Residues glutamate 422, aspartate 495, and aspartate 497 each contribute to the Mg(2+) site.

This sequence belongs to the type II topoisomerase GyrB family. As to quaternary structure, heterotetramer, composed of two GyrA and two GyrB chains. In the heterotetramer, GyrA contains the active site tyrosine that forms a transient covalent intermediate with DNA, while GyrB binds cofactors and catalyzes ATP hydrolysis. The cofactor is Mg(2+). Mn(2+) serves as cofactor. It depends on Ca(2+) as a cofactor.

Its subcellular location is the cytoplasm. The enzyme catalyses ATP-dependent breakage, passage and rejoining of double-stranded DNA.. In terms of biological role, a type II topoisomerase that negatively supercoils closed circular double-stranded (ds) DNA in an ATP-dependent manner to modulate DNA topology and maintain chromosomes in an underwound state. Negative supercoiling favors strand separation, and DNA replication, transcription, recombination and repair, all of which involve strand separation. Also able to catalyze the interconversion of other topological isomers of dsDNA rings, including catenanes and knotted rings. Type II topoisomerases break and join 2 DNA strands simultaneously in an ATP-dependent manner. The chain is DNA gyrase subunit B from Borrelia hermsii.